Here is a 147-residue protein sequence, read N- to C-terminus: Large ribosomal subunit protein uL13 (147 aa).

Belongs to the universal ribosomal protein uL13 family. As to quaternary structure, part of the 50S ribosomal subunit.

Functionally, this protein is one of the early assembly proteins of the 50S ribosomal subunit, although it is not seen to bind rRNA by itself. It is important during the early stages of 50S assembly. This is Large ribosomal subunit protein uL13 from Limosilactobacillus fermentum (strain NBRC 3956 / LMG 18251) (Lactobacillus fermentum).